The chain runs to 379 residues: Elongation factor Ts, mitochondrial (379 aa).

Residues 1-33 (MAWGQGAKRSILGLLFRSQHQTARAYSSSAFQT) constitute a mitochondrion transit peptide.

Belongs to the EF-Ts family.

Its subcellular location is the mitochondrion. Its function is as follows. Associates with the EF-Tu.GDP complex and induces the exchange of GDP to GTP. It remains bound to the aminoacyl-tRNA.EF-Tu.GTP complex up to the GTP hydrolysis stage on the ribosome. The sequence is that of Elongation factor Ts, mitochondrial from Zea mays (Maize).